Here is a 494-residue protein sequence, read N- to C-terminus: GlcNAc-binding protein A (494 aa).

Residues 1-21 (MKLNKIMLAMVVMSISGTAMA) form the signal peptide. One can recognise a Chitin-binding type-4 domain in the interval 22–192 (HGYIENPPSR…TFYNMIDAEF (171 aa)). Residues 435–484 (APAWSNKSSYQAKDTVTHNGRIYMSKWWADKASVPGDAAVTDTTGNGSGW) form the Chitin-binding type-3 domain. The interval 474–494 (VTDTTGNGSGWGKVWEDKGAC) is disordered.

This sequence belongs to the GbpA family.

The protein localises to the secreted. Its function is as follows. Probably interacts with GlcNAc residues. May promote attachment to both epithelial cell surfaces and chitin. The polypeptide is GlcNAc-binding protein A (Yersinia enterocolitica serotype O:8 / biotype 1B (strain NCTC 13174 / 8081)).